The sequence spans 485 residues: E3 ubiquitin-protein ligase RNF14 (485 aa).

One can recognise an RWD domain in the interval 11–137 (DELLALASIY…QFLKEETLTY (127 aa)). The short motif at 37 to 45 (RIYLDLPQN) is the D-box element. The segment at 217-458 (KLFLCSICFC…DSESPCFNRL (242 aa)) is TRIAD supradomain. Zn(2+) is bound by residues Cys-221, Cys-224, Cys-239, His-241, Cys-244, Cys-247, Cys-266, Cys-271, Cys-310, Cys-315, Cys-330, Cys-333, Cys-338, Cys-341, and His-346. Residues 221-271 (CSICFCEKLGSDCMYFLECKHVYCKACLKDYFEIQIKDGQVKCLNCPEPQC) form an RING-type 1 zinc finger. The IBR-type zinc-finger motif lies at 290–351 (ARYDRLLLQS…RLTYHGLSPC (62 aa)). A Phosphoserine modification is found at Ser-349. The Zn(2+) site is built by Cys-351, Cys-405, and Cys-408. An RING-type 2; atypical zinc finger spans residues 405 to 434 (CPCCGTPIQKLDGCNKMTCTGCMQYFCWIC). Cys-418 is a catalytic residue. Residues Cys-423, Cys-426, Cys-431, Cys-434, His-446, and Cys-454 each contribute to the Zn(2+) site.

This sequence belongs to the RBR family. RNF14 subfamily. In terms of assembly, interacts with GCN1; interaction takes place in response to ribosome collisions and is required for ubiquitination of EEF1A1/eEF1A. Interacts with the ubiquitin-conjugating enzymes UBE2E1 and UBE2E2. Interacts with AR/androgen receptor. Interacts with TCF7/TCF1, TCF7L1/TCF3 and TCF7L2/TCF4; promoting Wnt signaling. In terms of processing, RING-type zinc finger-dependent and UBE2E2-dependent autoubiquitination.

It localises to the cytoplasm. The protein localises to the nucleus. It carries out the reaction [E2 ubiquitin-conjugating enzyme]-S-ubiquitinyl-L-cysteine + [acceptor protein]-L-lysine = [E2 ubiquitin-conjugating enzyme]-L-cysteine + [acceptor protein]-N(6)-ubiquitinyl-L-lysine.. Its pathway is protein modification; protein ubiquitination. E3 ubiquitin-protein ligase that plays a key role in the RNF14-RNF25 translation quality control pathway, a pathway that takes place when a ribosome has stalled during translation, and which promotes ubiquitination and degradation of translation factors on stalled ribosomes. Recruited to stalled ribosomes by the ribosome collision sensor GCN1 and mediates 'Lys-6'-linked ubiquitination of target proteins, leading to their degradation. Mediates ubiquitination of EEF1A1/eEF1A and ETF1/eRF1 translation factors on stalled ribosomes, leading to their degradation. Also catalyzes ubiquitination of ribosomal proteins RPL0, RPL1, RPL12, RPS13 and RPS17. Specifically required to resolve RNA-protein cross-links caused by reactive aldehydes, which trigger translation stress by stalling ribosomes: acts by catalying 'Lys-6'-linked ubiquitination of RNA-protein cross-links, leading to their removal by the ATP-dependent unfoldase VCP and subsequent degradation by the proteasome. Independently of its function in the response to stalled ribosomes, acts as a regulator of transcription in Wnt signaling via its interaction with TCF transcription factors (TCF7/TCF1, TCF7L1/TCF3 and TCF7L2/TCF4). May also play a role as a coactivator for androgen- and, to a lesser extent, progesterone-dependent transcription. This Mus musculus (Mouse) protein is E3 ubiquitin-protein ligase RNF14.